Here is a 92-residue protein sequence, read N- to C-terminus: Alpha-defensin 25 (92 aa).

Residues 1–19 (MKTLVLLSALALLAFQVQA) form the signal peptide. Positions 20-57 (DPIQNRDEESKIDEQPGKEDQAVSVSFGDPEGSSLQEE) are excised as a propeptide. The segment covering 24 to 40 (NRDEESKIDEQPGKEDQ) has biased composition (basic and acidic residues). The tract at residues 24 to 53 (NRDEESKIDEQPGKEDQAVSVSFGDPEGSS) is disordered. 3 disulfide bridges follow: Cys63/Cys92, Cys65/Cys80, and Cys70/Cys91.

Belongs to the alpha-defensin family.

It is found in the secreted. Functionally, may have microbicidal activities. This chain is Alpha-defensin 25 (Defa25), found in Mus musculus (Mouse).